The primary structure comprises 1747 residues: Retroelement silencing factor 1 (1747 aa).

A Glycyl lysine isopeptide (Lys-Gly) (interchain with G-Cter in SUMO2) cross-link involves residue lysine 216. Serine 221 is modified (phosphoserine). Residues 261-272 show a composition bias toward polar residues; sequence TSAVPSQQYATQ. A disordered region spans residues 261-280; it reads TSAVPSQQYATQTDKRPPPP. Lysine 707 participates in a covalent cross-link: Glycyl lysine isopeptide (Lys-Gly) (interchain with G-Cter in SUMO2). 3 disordered regions span residues 833–856, 923–956, and 1073–1101; these read PLTQ…NVNQ, PQKP…GFQK, and EGSV…KDPA. Residues 842–856 show a composition bias toward polar residues; sequence ESTNGNSEVTPNVNQ. Residues 937–956 show a composition bias toward basic and acidic residues; that stretch reads REPEKQLDNTTENKDFGFQK. Residues 1073 to 1087 show a composition bias toward polar residues; that stretch reads EGSVGQQTTYQTSED. The span at 1089–1101 shows a compositional bias: basic and acidic residues; it reads TADKTSSDSKDPA. Residue lysine 1136 forms a Glycyl lysine isopeptide (Lys-Gly) (interchain with G-Cter in SUMO2) linkage. Position 1145 is a phosphoserine (serine 1145). A disordered region spans residues 1200 to 1274; sequence EEKQKEQCSP…KSLPRTEQEL (75 aa). Residues 1217 to 1226 show a composition bias toward basic and acidic residues; it reads QGERTSDRDV. Threonine 1240 bears the Phosphothreonine mark. Over residues 1242-1261 the composition is skewed to basic and acidic residues; it reads PDGKSHFPELQDDSRKDTPK. Phosphoserine is present on serine 1358. Residues lysine 1528 and lysine 1636 each participate in a glycyl lysine isopeptide (Lys-Gly) (interchain with G-Cter in SUMO2) cross-link. The interval 1686–1716 is disordered; that stretch reads KRTQKDSQERDNVNSRLSKRSFSADGFEMLQ. The span at 1689–1698 shows a compositional bias: basic and acidic residues; it reads QKDSQERDNV. Serine 1708 carries the phosphoserine modification. Lysine 1723 is covalently cross-linked (Glycyl lysine isopeptide (Lys-Gly) (interchain with G-Cter in SUMO2)). Position 1740 is a phosphoserine (serine 1740).

Interacts with SETDB1.

Its subcellular location is the nucleus. Functionally, plays a role in the regulation of imprinted gene expression, regulates repressive epigenetic modifications associated with SETDB1. Required for the recruitment or accumulation of SETDB1 to the endogenous retroviruses (ERVs) and maintenance of repressive chromatin configuration, contributing to a subset of the SETDB1-dependent ERV silencing in embryonic stem cells. The chain is Retroelement silencing factor 1 from Homo sapiens (Human).